We begin with the raw amino-acid sequence, 144 residues long: Flagellar assembly factor FliW (144 aa).

The protein belongs to the FliW family. Interacts with translational regulator CsrA and flagellin(s).

It is found in the cytoplasm. In terms of biological role, acts as an anti-CsrA protein, binds CsrA and prevents it from repressing translation of its target genes, one of which is flagellin. Binds to flagellin and participates in the assembly of the flagellum. In Bacillus pumilus (strain SAFR-032), this protein is Flagellar assembly factor FliW.